We begin with the raw amino-acid sequence, 563 residues long: Mitochondrial distribution and morphology protein 34 (563 aa).

The 195-residue stretch at 1-195 (MAFNFNWSPL…LPAIIHRLSL (195 aa)) folds into the SMP-LTD domain. Disordered stretches follow at residues 298–460 (ERGD…QIPT) and 535–563 (RHDK…PKAL). Composition is skewed to polar residues over residues 303–332 (AGTT…FSNR) and 346–357 (SLVNMNSATTGL). Residues 365–383 (SRSHTTRKKKNRVVNLRKS) show a composition bias toward basic residues. 2 stretches are compositionally biased toward polar residues: residues 386-402 (TDNV…SITA) and 444-460 (PSRS…QIPT).

The protein belongs to the MDM34 family. In terms of assembly, component of the ER-mitochondria encounter structure (ERMES) or MDM complex, composed of mmm1, mdm10, mdm12 and mdm34.

It localises to the mitochondrion outer membrane. Component of the ERMES/MDM complex, which serves as a molecular tether to connect the endoplasmic reticulum (ER) and mitochondria. Components of this complex are involved in the control of mitochondrial shape and protein biogenesis, and function in nonvesicular lipid trafficking between the ER and mitochondria. Mdm34 is required for the interaction of the ER-resident membrane protein mmm1 and the outer mitochondrial membrane-resident beta-barrel protein mdm10. This chain is Mitochondrial distribution and morphology protein 34, found in Sclerotinia sclerotiorum (strain ATCC 18683 / 1980 / Ss-1) (White mold).